The chain runs to 1381 residues: Major capsid protein (1381 aa).

The protein belongs to the herpesviridae major capsid protein family. As to quaternary structure, homomultimer. Makes the hexons and eleven out of twelve pentons. Interacts with triplex proteins 1/TRX1 and 2/TRX2; adjacent capsomers are linked together in groups of three by triplexes, heterotrimeric complexes composed of one molecule of TRX1 and two molecules of TRX2. Interacts with scaffold protein; this interaction allows efficient MCP transport to the host nucleus. Interacts with capsid vertex component 2/CVC2. Interacts with the small capsomere-interacting protein/SCP.

The protein resides in the virion. It localises to the host nucleus. Functionally, self-assembles to form an icosahedral capsid with a T=16 symmetry, about 200 nm in diameter, and consisting of 150 hexons and 12 pentons (total of 162 capsomers). Hexons form the edges and faces of the capsid and are each composed of six MCP molecules. In contrast, one penton is found at each of the 12 vertices. Eleven of the pentons are MCP pentamers, while the last vertex is occupied by the portal complex. The capsid is surrounded by a layer of proteinaceous material designated the tegument which, in turn, is enclosed in an envelope of host cell-derived lipids containing virus-encoded glycoproteins. This is Major capsid protein from Epstein-Barr virus (strain B95-8) (HHV-4).